The sequence spans 405 residues: Diaminopimelate decarboxylase (405 aa).

An N6-(pyridoxal phosphate)lysine modification is found at Lys46. Pyridoxal 5'-phosphate contacts are provided by residues Gly225 and 259 to 262 (EPGR). Residues Arg262, Arg298, and Tyr302 each contribute to the substrate site. The Proton donor role is filled by Cys329. Residues Glu330 and Tyr358 each contribute to the substrate site. Tyr358 lines the pyridoxal 5'-phosphate pocket.

The protein belongs to the Orn/Lys/Arg decarboxylase class-II family. LysA subfamily. In terms of assembly, homodimer. Requires pyridoxal 5'-phosphate as cofactor.

The catalysed reaction is meso-2,6-diaminopimelate + H(+) = L-lysine + CO2. It participates in amino-acid biosynthesis; L-lysine biosynthesis via DAP pathway; L-lysine from DL-2,6-diaminopimelate: step 1/1. Specifically catalyzes the decarboxylation of meso-diaminopimelate (meso-DAP) to L-lysine. This chain is Diaminopimelate decarboxylase, found in Helicobacter pylori (strain J99 / ATCC 700824) (Campylobacter pylori J99).